The sequence spans 269 residues: Zinc finger protein SNAI2 (269 aa).

Residues 1–20 (MPRSFLVKKHFNASKKPNYS) are SNAG domain. The interval 81 to 117 (SSSLGRVSPPPSSDTSSKDHSGSESPISDEEERLQPK) is disordered. 4 consecutive C2H2-type zinc fingers follow at residues 129–151 (FQCNLCNKTYSTFSGLAKHKQLH), 160–182 (FSCKYCDKEYVSLGALKMHIRTH), 186–208 (CVCKICGKAFSRPWLLQGHIRTH), and 214–236 (FSCPHCNRAFADRSNLRAHLQTH). A C2H2-type 5; atypical zinc finger spans residues 242–265 (YQCKNCSKTFSRMSLLHKHEESGC).

It belongs to the snail C2H2-type zinc-finger protein family. Interacts (via SNAG domain) with LIMD1 (via LIM domains), WTIP (via LIM domains) and AJUBA (via LIM domains). Interacts (via zinc fingers) with KPNA2, KPNB1, and TNPO1. May interact (via zinc fingers) with IPO7. In terms of processing, phosphorylated by GSK3B. Once phosphorylated, it becomes a target for ubiquitination. Ubiquitinated by the SCF(FBXO11) complex; ubiquitination requires previous GSK3B-mediated SNAI2 phosphorylation.

The protein resides in the nucleus. It localises to the cytoplasm. Transcriptional repressor that modulates both activator-dependent and basal transcription. Involved in the generation and migration of neural crest cells. Plays a role in mediating RAF1-induced transcriptional repression of the TJ protein, occludin (OCLN) and subsequent oncogenic transformation of epithelial cells. Represses BRCA2 expression by binding to its E2-box-containing silencer and recruiting CTBP1 and HDAC1 in breast cells. In epidermal keratinocytes, binds to the E-box in ITGA3 promoter and represses its transcription. Involved in the regulation of ITGB1 and ITGB4 expression and cell adhesion and proliferation in epidermal keratinocytes. Binds to E-box2 domain of BSG and activates its expression during TGFB1-induced epithelial-mesenchymal transition (EMT) in hepatocytes. Represses E-Cadherin/CDH1 transcription via E-box elements. Involved in osteoblast maturation. Binds to RUNX2 and SOC9 promoters and may act as a positive and negative transcription regulator, respectively, in osteoblasts. Binds to CXCL12 promoter via E-box regions in mesenchymal stem cells and osteoblasts. Plays an essential role in TWIST1-induced EMT and its ability to promote invasion and metastasis. This chain is Zinc finger protein SNAI2 (Snai2), found in Mus musculus (Mouse).